Here is a 503-residue protein sequence, read N- to C-terminus: Probable folate-biopterin transporter 6 (503 aa).

12 helical membrane-spanning segments follow: residues Ser-56–Phe-76, Leu-101–Ile-121, Pro-128–Gly-148, Ala-153–Ile-173, Leu-194–Val-214, Gly-221–Tyr-241, Leu-281–Tyr-301, Phe-314–His-334, Asn-344–Ile-364, Leu-369–Ile-389, Leu-404–Gly-424, and Trp-450–Val-470.

The protein belongs to the major facilitator superfamily. Folate-biopterin transporter (TC 2.A.71) family.

The protein localises to the membrane. In terms of biological role, could mediate folate transport. In Arabidopsis thaliana (Mouse-ear cress), this protein is Probable folate-biopterin transporter 6.